The chain runs to 327 residues: UPF0285 protein Maeo_0978 (327 aa).

This sequence belongs to the UPF0285 family.

The chain is UPF0285 protein Maeo_0978 from Methanococcus aeolicus (strain ATCC BAA-1280 / DSM 17508 / OCM 812 / Nankai-3).